The sequence spans 417 residues: UDP-N-acetylglucosamine 1-carboxyvinyltransferase (417 aa).

Phosphoenolpyruvate is bound at residue 23-24; the sequence is KN. Position 93 (Arg-93) interacts with UDP-N-acetyl-alpha-D-glucosamine. Asp-117 functions as the Proton donor in the catalytic mechanism. UDP-N-acetyl-alpha-D-glucosamine-binding residues include Asp-305 and Val-327.

The protein belongs to the EPSP synthase family. MurA subfamily.

The protein localises to the cytoplasm. It catalyses the reaction phosphoenolpyruvate + UDP-N-acetyl-alpha-D-glucosamine = UDP-N-acetyl-3-O-(1-carboxyvinyl)-alpha-D-glucosamine + phosphate. It functions in the pathway cell wall biogenesis; peptidoglycan biosynthesis. Cell wall formation. Adds enolpyruvyl to UDP-N-acetylglucosamine. This is UDP-N-acetylglucosamine 1-carboxyvinyltransferase from Mycolicibacterium paratuberculosis (strain ATCC BAA-968 / K-10) (Mycobacterium paratuberculosis).